Here is a 463-residue protein sequence, read N- to C-terminus: Type I restriction enzyme StySPI specificity subunit (463 aa).

This sequence belongs to the type-I restriction system S methylase family. The type I restriction/modification system is composed of three polypeptides R, M and S; the restriction enzyme has stoichiometry R(2)M(2)S(1) while the methyltransferase is M(2)S(1).

In terms of biological role, the specificity (S) subunit of a type I restriction enzyme; this subunit dictates DNA sequence specificity. The M and S subunits together form a methyltransferase (MTase) that methylates A-2 on the top strand and A-3 on the bottom strand of the sequence 5'-AACN(6)GTRC-3'. In the presence of the R subunit the complex can also act as an endonuclease, binding to the same target sequence but cutting the DNA some distance from this site. Whether the DNA is cut or modified depends on the methylation state of the target sequence. When the target site is unmodified, the DNA is cut. When the target site is hemimethylated, the complex acts as a maintenance MTase modifying the DNA so that both strands become methylated. After locating a non-methylated recognition site, the enzyme complex serves as a molecular motor that translocates DNA in an ATP-dependent manner until a collision occurs that triggers cleavage. This chain is Type I restriction enzyme StySPI specificity subunit, found in Salmonella potsdam.